The primary structure comprises 233 residues: Glucosamine-6-phosphate deaminase (233 aa).

Residue Asp-62 is the Proton acceptor; for enolization step of the active site. Asn-128 functions as the For ring-opening step in the catalytic mechanism. His-130 (proton acceptor; for ring-opening step) is an active-site residue. The active-site For ring-opening step is the Glu-135.

This sequence belongs to the glucosamine/galactosamine-6-phosphate isomerase family. NagB subfamily.

The catalysed reaction is alpha-D-glucosamine 6-phosphate + H2O = beta-D-fructose 6-phosphate + NH4(+). The protein operates within amino-sugar metabolism; N-acetylneuraminate degradation; D-fructose 6-phosphate from N-acetylneuraminate: step 5/5. Catalyzes the reversible isomerization-deamination of glucosamine 6-phosphate (GlcN6P) to form fructose 6-phosphate (Fru6P) and ammonium ion. In Leuconostoc citreum (strain KM20), this protein is Glucosamine-6-phosphate deaminase.